We begin with the raw amino-acid sequence, 368 residues long: Dihydroorotate dehydrogenase (quinone) (368 aa).

Residues 67–71 and T91 each bind FMN; that span reads AGFDK. Position 71 (K71) interacts with substrate. Position 116-120 (116-120) interacts with substrate; that stretch reads NRMGF. Residues N146 and N179 each contribute to the FMN site. Residue N179 coordinates substrate. S182 functions as the Nucleophile in the catalytic mechanism. Position 184 (N184) interacts with substrate. FMN-binding residues include K222 and T250. 251–252 contributes to the substrate binding site; sequence NT. FMN is bound by residues G276, G305, and 326-327; that span reads YS.

The protein belongs to the dihydroorotate dehydrogenase family. Type 2 subfamily. Monomer. Requires FMN as cofactor.

The protein localises to the cell membrane. The enzyme catalyses (S)-dihydroorotate + a quinone = orotate + a quinol. The protein operates within pyrimidine metabolism; UMP biosynthesis via de novo pathway; orotate from (S)-dihydroorotate (quinone route): step 1/1. Catalyzes the conversion of dihydroorotate to orotate with quinone as electron acceptor. The polypeptide is Dihydroorotate dehydrogenase (quinone) (Streptomyces coelicolor (strain ATCC BAA-471 / A3(2) / M145)).